The chain runs to 190 residues: UPF0398 protein LAR_0869 (190 aa).

It belongs to the UPF0398 family.

The protein is UPF0398 protein LAR_0869 of Limosilactobacillus reuteri subsp. reuteri (strain JCM 1112) (Lactobacillus reuteri).